We begin with the raw amino-acid sequence, 506 residues long: Ribose import ATP-binding protein RbsA 2 (506 aa).

2 consecutive ABC transporter domains span residues 5 to 241 (LRLS…VGRR) and 254 to 498 (ADAP…TAGT). Position 37-44 (37-44 (GENGAGKS)) interacts with ATP.

It belongs to the ABC transporter superfamily. Ribose importer (TC 3.A.1.2.1) family. In terms of assembly, the complex is composed of an ATP-binding protein (RbsA), two transmembrane proteins (RbsC) and a solute-binding protein (RbsB).

It is found in the cell inner membrane. It carries out the reaction D-ribose(out) + ATP + H2O = D-ribose(in) + ADP + phosphate + H(+). Its function is as follows. Part of the ABC transporter complex RbsABC involved in ribose import. Responsible for energy coupling to the transport system. The polypeptide is Ribose import ATP-binding protein RbsA 2 (Burkholderia cenocepacia (strain HI2424)).